The following is a 642-amino-acid chain: uncharacterized protein (642 aa).

Residues glutamate 15 and aspartate 118 each contribute to the Mg(2+) site. Residues 29–149 form the PINc domain; the sequence is VCVDTCVVID…YNLAKAQGIE (121 aa). The KH domain occupies 510-578; it reads DNSIDLIVPE…ELESTRIYET (69 aa).

The protein in the N-terminal section; belongs to the PINc/VapC protein family. The cofactor is Mg(2+).

This is an uncharacterized protein from Methanocaldococcus jannaschii (strain ATCC 43067 / DSM 2661 / JAL-1 / JCM 10045 / NBRC 100440) (Methanococcus jannaschii).